A 214-amino-acid chain; its full sequence is Probable nicotinate-nucleotide adenylyltransferase (214 aa).

This sequence belongs to the NadD family.

It catalyses the reaction nicotinate beta-D-ribonucleotide + ATP + H(+) = deamido-NAD(+) + diphosphate. It participates in cofactor biosynthesis; NAD(+) biosynthesis; deamido-NAD(+) from nicotinate D-ribonucleotide: step 1/1. Catalyzes the reversible adenylation of nicotinate mononucleotide (NaMN) to nicotinic acid adenine dinucleotide (NaAD). This chain is Probable nicotinate-nucleotide adenylyltransferase, found in Pseudomonas aeruginosa (strain UCBPP-PA14).